The chain runs to 350 residues: N-acetyllactosaminide beta-1,3-N-acetylglucosaminyltransferase 4 (350 aa).

At 1–4 the chain is on the cytoplasmic side; the sequence is MLPR. A helical; Signal-anchor for type II membrane protein transmembrane segment spans residues 5–25; the sequence is LGCVLFCSLVVLLLSCLLLLK. Topologically, residues 26–350 are lumenal; that stretch reads ERIPAGSSKA…RLKCAATHKP (325 aa). Asn-53 and Asn-166 each carry an N-linked (GlcNAc...) asparagine glycan.

This sequence belongs to the glycosyltransferase 31 family.

It is found in the golgi apparatus membrane. The enzyme catalyses a beta-D-galactosyl-(1-&gt;4)-N-acetyl-beta-D-glucosaminyl derivative + UDP-N-acetyl-alpha-D-glucosamine = an N-acetyl-beta-D-glucosaminyl-(1-&gt;3)-beta-D-galactosyl-(1-&gt;4)-N-acetyl-beta-D-glucosaminyl derivative + UDP + H(+). Its pathway is protein modification; protein glycosylation. Functionally, beta-1,3-N-acetylglucosaminyltransferase involved in the synthesis of poly-N-acetyllactosamine. Has activity for type 2 oligosaccharides. The sequence is that of N-acetyllactosaminide beta-1,3-N-acetylglucosaminyltransferase 4 (B3gnt4) from Mus musculus (Mouse).